Consider the following 117-residue polypeptide: Large ribosomal subunit protein bL19 (117 aa).

This sequence belongs to the bacterial ribosomal protein bL19 family.

Its function is as follows. This protein is located at the 30S-50S ribosomal subunit interface and may play a role in the structure and function of the aminoacyl-tRNA binding site. The sequence is that of Large ribosomal subunit protein bL19 from Shewanella woodyi (strain ATCC 51908 / MS32).